The sequence spans 82 residues: Putative membrane protein insertion efficiency factor (82 aa).

Belongs to the UPF0161 family.

It localises to the cell inner membrane. Could be involved in insertion of integral membrane proteins into the membrane. This is Putative membrane protein insertion efficiency factor from Rickettsia massiliae (strain Mtu5).